A 623-amino-acid polypeptide reads, in one-letter code: Transketolase (623 aa).

Position 1 is an N-acetylmethionine (methionine 1). An N6-acetyllysine mark is found at lysine 6 and lysine 11. Histidine 37 is a binding site for substrate. The thiamine diphosphate site is built by serine 40 and histidine 77. Serine 104 is modified (phosphoserine). A thiamine diphosphate-binding site is contributed by 123–125; the sequence is GSL. At lysine 144 the chain carries N6-acetyllysine. Aspartate 155 contacts Mg(2+). Thiamine diphosphate is bound by residues glycine 156 and asparagine 185. Positions 185 and 187 each coordinate Mg(2+). Residues lysine 204, lysine 232, and lysine 241 each carry the N6-acetyllysine modification. Positions 244 and 258 each coordinate thiamine diphosphate. Histidine 258 lines the substrate pocket. Lysine 260 bears the N6-acetyllysine mark. The residue at position 275 (tyrosine 275) is a Phosphotyrosine. Threonine 287 is subject to Phosphothreonine. Residue serine 295 is modified to Phosphoserine. Arginine 318 and serine 345 together coordinate substrate. Serine 345 is modified (phosphoserine). Lysine 352 participates in a covalent cross-link: Glycyl lysine isopeptide (Lys-Gly) (interchain with G-Cter in SUMO2). Glutamate 366 serves as the catalytic Proton donor. Phenylalanine 392 is a binding site for thiamine diphosphate. Residues histidine 416 and aspartate 424 each contribute to the substrate site. Glutamine 428 serves as a coordination point for thiamine diphosphate. Arginine 474 is a binding site for substrate. Residues lysine 538 and lysine 603 each carry the N6-acetyllysine modification.

Belongs to the transketolase family. In terms of assembly, homodimer. Mg(2+) is required as a cofactor. It depends on Ca(2+) as a cofactor. Requires Mn(2+) as cofactor. The cofactor is Co(2+). Thiamine diphosphate serves as cofactor.

The catalysed reaction is D-sedoheptulose 7-phosphate + D-glyceraldehyde 3-phosphate = aldehydo-D-ribose 5-phosphate + D-xylulose 5-phosphate. In terms of biological role, catalyzes the transfer of a two-carbon ketol group from a ketose donor to an aldose acceptor, via a covalent intermediate with the cofactor thiamine pyrophosphate. This chain is Transketolase (Tkt), found in Mus musculus (Mouse).